A 380-amino-acid chain; its full sequence is Putative T-box protein 40 (380 aa).

The segment at residues 11 to 192 is a DNA-binding region (T-box); sequence MAEEDRWLTQ…KNATFENRLD (182 aa). Positions 188 to 215 are disordered; the sequence is ENRLDGGNKRKNTNSREEPSSKRSKNET. Residues 189 to 215 show a composition bias toward basic and acidic residues; sequence NRLDGGNKRKNTNSREEPSSKRSKNET.

The protein resides in the nucleus. The sequence is that of Putative T-box protein 40 (tbx-40) from Caenorhabditis elegans.